Reading from the N-terminus, the 444-residue chain is Phosphoglucosamine mutase (444 aa).

The active-site Phosphoserine intermediate is the Ser-100. The Mg(2+) site is built by Ser-100, Asp-240, Asp-242, and Asp-244. Ser-100 is subject to Phosphoserine.

Belongs to the phosphohexose mutase family. Mg(2+) is required as a cofactor. Post-translationally, activated by phosphorylation.

The catalysed reaction is alpha-D-glucosamine 1-phosphate = D-glucosamine 6-phosphate. Functionally, catalyzes the conversion of glucosamine-6-phosphate to glucosamine-1-phosphate. In Desulforamulus reducens (strain ATCC BAA-1160 / DSM 100696 / MI-1) (Desulfotomaculum reducens), this protein is Phosphoglucosamine mutase.